Reading from the N-terminus, the 201-residue chain is IDLSRF-like peptide (201 aa).

The N-terminal stretch at 1-28 is a signal peptide; the sequence is MVRRFCNGAVALGIALTACAAFPRAIMA. A propeptide spanning residues 43–201 is cleaved from the precursor; sequence SDACHPYEPF…EKLVKTGFLD (159 aa). The 41-residue stretch at 45–85 folds into the LDL-receptor class A domain; it reads ACHPYEPFKCPGDGLCISIQYLCDGAPDCQDGYDEDSRLCT. 3 disulfides stabilise this stretch: C46/C60, C54/C73, and C67/C84.

In terms of tissue distribution, expressed in central brain, antennal and optical lobes, in gnathal, thoracic and abdominal ganglia and in the retrocerebral complex (at protein level).

It is found in the secreted. This is IDLSRF-like peptide from Camponotus floridanus (Florida carpenter ant).